A 63-amino-acid chain; its full sequence is Large ribosomal subunit protein uL29 (63 aa).

The protein belongs to the universal ribosomal protein uL29 family.

The sequence is that of Large ribosomal subunit protein uL29 from Photobacterium profundum (strain SS9).